The sequence spans 171 residues: ATP synthase subunit b (171 aa).

The chain crosses the membrane as a helical span at residues 26–46 (INLVLVIALLVYFLKGFLGGI).

This sequence belongs to the ATPase B chain family. As to quaternary structure, F-type ATPases have 2 components, F(1) - the catalytic core - and F(0) - the membrane proton channel. F(1) has five subunits: alpha(3), beta(3), gamma(1), delta(1), epsilon(1). F(0) has four main subunits: a(1), b(1), b'(1) and c(10-14). The alpha and beta chains form an alternating ring which encloses part of the gamma chain. F(1) is attached to F(0) by a central stalk formed by the gamma and epsilon chains, while a peripheral stalk is formed by the delta, b and b' chains.

The protein localises to the cellular thylakoid membrane. Functionally, f(1)F(0) ATP synthase produces ATP from ADP in the presence of a proton or sodium gradient. F-type ATPases consist of two structural domains, F(1) containing the extramembraneous catalytic core and F(0) containing the membrane proton channel, linked together by a central stalk and a peripheral stalk. During catalysis, ATP synthesis in the catalytic domain of F(1) is coupled via a rotary mechanism of the central stalk subunits to proton translocation. In terms of biological role, component of the F(0) channel, it forms part of the peripheral stalk, linking F(1) to F(0). This Synechococcus sp. (strain RCC307) protein is ATP synthase subunit b.